A 310-amino-acid chain; its full sequence is 2-dehydropantoate 2-reductase (310 aa).

NADP(+) is bound by residues 9–14 (GVGAIG) and asparagine 100. Asparagine 100 serves as a coordination point for substrate. Lysine 184 acts as the Proton donor in catalysis. The substrate site is built by asparagine 188, asparagine 192, and serine 259. Glutamate 270 contributes to the NADP(+) binding site.

This sequence belongs to the ketopantoate reductase family.

The protein resides in the cytoplasm. It carries out the reaction (R)-pantoate + NADP(+) = 2-dehydropantoate + NADPH + H(+). The protein operates within cofactor biosynthesis; (R)-pantothenate biosynthesis; (R)-pantoate from 3-methyl-2-oxobutanoate: step 2/2. Functionally, catalyzes the NADPH-dependent reduction of ketopantoate into pantoic acid. This chain is 2-dehydropantoate 2-reductase, found in Aquifex aeolicus (strain VF5).